Here is a 666-residue protein sequence, read N- to C-terminus: Protein-arginine deiminase type-4 (666 aa).

Asparagine 153, aspartate 155, aspartate 165, aspartate 168, aspartate 176, and aspartate 179 together coordinate Ca(2+). Arginine 212 and arginine 218 each carry citrulline. Glutamine 349 provides a ligand contact to Ca(2+). Residue aspartate 350 is part of the active site. Glutamate 351, glutamate 353, aspartate 369, and serine 370 together coordinate Ca(2+). Residues arginine 372, arginine 374, and arginine 383 each carry the citrulline modification. Arginine 374 provides a ligand contact to substrate. Ca(2+) contacts are provided by phenylalanine 407, leucine 410, and glutamate 411. Active-site residues include histidine 471, aspartate 473, and cysteine 648.

It belongs to the protein arginine deiminase family. Ca(2+) is required as a cofactor. Post-translationally, autocitrullination at Arg-372 and Arg-374 inactivates the enzyme. In terms of tissue distribution, epidermis.

Its subcellular location is the cytoplasm. It localises to the nucleus. The protein localises to the cytoplasmic granule. The catalysed reaction is L-arginyl-[protein] + H2O = L-citrullyl-[protein] + NH4(+). Its function is as follows. Catalyzes the citrullination/deimination of arginine residues of proteins such as histones, thereby playing a key role in histone code and regulation of stem cell maintenance. Citrullinates histone H1 at 'Arg-54' (to form H1R54ci), histone H3 at 'Arg-2', 'Arg-8', 'Arg-17' and/or 'Arg-26' (to form H3R2ci, H3R8ci, H3R17ci, H3R26ci, respectively) and histone H4 at 'Arg-3' (to form H4R3ci). Acts as a key regulator of stem cell maintenance by mediating citrullination of histone H1: citrullination of 'Arg-54' of histone H1 (H1R54ci) results in H1 displacement from chromatin and global chromatin decondensation, thereby promoting pluripotency and stem cell maintenance. Promotes profound chromatin decondensation during the innate immune response to infection in neutrophils by mediating formation of H1R54ci. Required for the formation of neutrophil extracellular traps (NETs); NETs are mainly composed of DNA fibers and are released by neutrophils to bind pathogens during inflammation. Citrullination of histone H3 prevents their methylation by CARM1 and HRMT1L2/PRMT1 and represses transcription. Citrullinates EP300/P300 at 'Arg-2142', which favors its interaction with NCOA2/GRIP1. The sequence is that of Protein-arginine deiminase type-4 (Padi4) from Rattus norvegicus (Rat).